The sequence spans 488 residues: 3-octaprenyl-4-hydroxybenzoate carboxy-lyase (488 aa).

Position 172 (N172) interacts with Mn(2+). Prenylated FMN is bound by residues I175–R177, R189–L191, and R194–G195. Residue E238 coordinates Mn(2+). D287 (proton donor) is an active-site residue.

This sequence belongs to the UbiD family. As to quaternary structure, homohexamer. Prenylated FMN serves as cofactor. It depends on Mn(2+) as a cofactor.

It localises to the cell membrane. The catalysed reaction is a 4-hydroxy-3-(all-trans-polyprenyl)benzoate + H(+) = a 2-(all-trans-polyprenyl)phenol + CO2. Its pathway is cofactor biosynthesis; ubiquinone biosynthesis. Functionally, catalyzes the decarboxylation of 3-octaprenyl-4-hydroxy benzoate to 2-octaprenylphenol, an intermediate step in ubiquinone biosynthesis. This chain is 3-octaprenyl-4-hydroxybenzoate carboxy-lyase, found in Pseudomonas fluorescens (strain ATCC BAA-477 / NRRL B-23932 / Pf-5).